The following is a 383-amino-acid chain: Acetylornithine deacetylase (383 aa).

A Zn(2+)-binding site is contributed by H80. D82 is a catalytic residue. Zn(2+) is bound at residue D112. The active site involves E144. Residues E145, E169, and H355 each coordinate Zn(2+).

The protein belongs to the peptidase M20A family. ArgE subfamily. As to quaternary structure, homodimer. Requires Zn(2+) as cofactor. The cofactor is Co(2+). It depends on glutathione as a cofactor.

The protein localises to the cytoplasm. The enzyme catalyses N(2)-acetyl-L-ornithine + H2O = L-ornithine + acetate. The protein operates within amino-acid biosynthesis; L-arginine biosynthesis; L-ornithine from N(2)-acetyl-L-ornithine (linear): step 1/1. In terms of biological role, catalyzes the hydrolysis of the amide bond of N(2)-acetylated L-amino acids. Cleaves the acetyl group from N-acetyl-L-ornithine to form L-ornithine, an intermediate in L-arginine biosynthesis pathway, and a branchpoint in the synthesis of polyamines. This Escherichia coli (strain K12 / MC4100 / BW2952) protein is Acetylornithine deacetylase.